Reading from the N-terminus, the 348-residue chain is Selenide, water dikinase (348 aa).

Cysteine 17 is an active-site residue. ATP-binding positions include lysine 20 and 48–50 (TRD). Aspartate 51 serves as a coordination point for Mg(2+). ATP is bound by residues aspartate 68, aspartate 91, and 139 to 141 (GHS). Aspartate 91 lines the Mg(2+) pocket. Aspartate 227 serves as a coordination point for Mg(2+).

Belongs to the selenophosphate synthase 1 family. Class I subfamily. Homodimer. The cofactor is Mg(2+).

It carries out the reaction hydrogenselenide + ATP + H2O = selenophosphate + AMP + phosphate + 2 H(+). Its function is as follows. Synthesizes selenophosphate from selenide and ATP. The chain is Selenide, water dikinase from Yersinia pestis.